An 892-amino-acid polypeptide reads, in one-letter code: Zinc finger protein 473 homolog (892 aa).

In terms of domain architecture, KRAB spans 23-101 (ETLKDLAMDF…TKSSPLQSGF (79 aa)). 2 stretches are compositionally biased toward polar residues: residues 66–76 (DTSQPSLTSQP) and 84–97 (ATSTEVPETKSSPL). Disordered stretches follow at residues 66 to 97 (DTSQPSLTSQPDVREELEATSTEVPETKSSPL) and 134 to 203 (GDPE…DSVQ). Composition is skewed to basic and acidic residues over residues 138–156 (SLPRPDISDKESPADHQSP) and 190–203 (KESRSDLSQEDSVQ). 2 C2H2-type zinc fingers span residues 209-231 (YKCSECGESFSQSHHLIQHWVLH) and 265-287 (YTCQECGKRFSQNVYLQWHQKIH). Residues 297–308 (SDSNLEGLSRSP) show a composition bias toward polar residues. The disordered stretch occupies residues 297-370 (SDSNLEGLSR…HPKPLRHQKT (74 aa)). Composition is skewed to basic and acidic residues over residues 313–323 (GKQRLSKDTDS) and 332–353 (QDQEKPPTGESRDQENLHESQP). C2H2-type zinc fingers lie at residues 377 to 399 (FRCKKCGETFSGAFHLAKHQRAH), 404 to 426 (YKCASCPAVFNLSKHCFQHRKSH), 432 to 454 (CECQGCRKSFNWRSSLIKHQAIH), 460 to 482 (YKCDECGKAFNHSSTLKIHQRIH), 488 to 510 (HKCSECGKAFCRRTDLTEHQRVH), 516 to 538 (HQCPVCARTFNRPSHLVRHRLRH), 544 to 566 (FGCAKCKETFIYKEQLERHNKIH), and 572 to 594 (YECKQCGEHFICRSTLNCHLSIH). Residue lysine 476 forms a Glycyl lysine isopeptide (Lys-Gly) (interchain with G-Cter in SUMO2) linkage. Lysine 602 participates in a covalent cross-link: Glycyl lysine isopeptide (Lys-Gly) (interchain with G-Cter in SUMO2). Residues 697 to 719 (FKCDIYNRAFKQRAHLSKHQLIH) form a C2H2-type 11; degenerate zinc finger. 6 consecutive C2H2-type zinc fingers follow at residues 725 to 747 (FKCNECDRAFKQSNYLIQHQKTH), 753 to 775 (FECSECGKTFHQRSCLSKHQKIH), 781 to 803 (FKCGDCGKAFISGAQLIRHQRIH), 809 to 831 (YVCQECGKTFSQSSCLTLHLRIH), 837 to 859 (YTCGTCGKAFAQRANQRKHERIH), and 865 to 887 (YACGLCGKAFGLRTHLQQHQRIH).

The protein belongs to the krueppel C2H2-type zinc-finger protein family. Interacts with the SLBP/pre-mRNA complex but not with SLBP alone. Interacts with LSM11 in a U7 snRNP-dependent manner.

It is found in the nucleus. In terms of biological role, involved in histone 3'-end pre-mRNA processing by associating with U7 snRNP and interacting with SLBP/pre-mRNA complex. Increases histone 3'-end pre-mRNA processing but has no effect on U7 snRNP levels, when overexpressed. Required for cell cycle progression from G1 to S phases. This chain is Zinc finger protein 473 homolog (Znf473), found in Mus musculus (Mouse).